A 420-amino-acid chain; its full sequence is UDP-glucuronic acid decarboxylase 1 (420 aa).

Methionine 1 carries the post-translational modification N-acetylmethionine. The Cytoplasmic portion of the chain corresponds to 1-19 (MVSKALLRLVSAVNRRRMK). A helical; Signal-anchor for type II membrane protein membrane pass occupies residues 20–40 (LLLGIALLAYVASVWGNFVNM). The Lumenal segment spans residues 41 to 420 (RSIQENGELK…RIKKGRTRHS (380 aa)). Residue threonine 94 is modified to Phosphothreonine. NAD(+) contacts are provided by glycine 98, phenylalanine 99, valine 100, aspartate 119, asparagine 120, phenylalanine 122, threonine 123, glycine 124, aspartate 144, and valine 145. Positions 149 and 150 each coordinate UDP-alpha-D-glucuronate. Leucine 159 and serine 161 together coordinate NAD(+). Lysine 177 is a binding site for UDP-alpha-D-glucuronate. Threonine 178 is an NAD(+) binding site. Asparagine 185, glycine 188, lysine 191, and arginine 192 together coordinate UDP-alpha-D-glucuronate. Residues alanine 200, tyrosine 231, and lysine 235 each coordinate NAD(+). Tyrosine 231 acts as the Proton acceptor in catalysis. Tyrosine 245, glutamine 248, and glutamate 249 together coordinate UDP-alpha-D-glucuronate. Residues threonine 261, histidine 267, and arginine 272 each coordinate NAD(+). A glycan (N-linked (GlcNAc...) asparagine) is linked at asparagine 316.

It belongs to the NAD(P)-dependent epimerase/dehydratase family. UDP-glucuronic acid decarboxylase subfamily. Homodimer and homotetramer. Interacts with AKT1. NAD(+) serves as cofactor.

The protein resides in the golgi apparatus. The protein localises to the golgi stack membrane. The catalysed reaction is UDP-alpha-D-glucuronate + H(+) = UDP-alpha-D-xylose + CO2. Its pathway is nucleotide-sugar biosynthesis; UDP-alpha-D-xylose biosynthesis; UDP-alpha-D-xylose from UDP-alpha-D-glucuronate: step 1/1. Catalyzes the NAD-dependent decarboxylation of UDP-glucuronic acid to UDP-xylose. Necessary for the biosynthesis of the core tetrasaccharide in glycosaminoglycan biosynthesis. This chain is UDP-glucuronic acid decarboxylase 1, found in Homo sapiens (Human).